A 246-amino-acid polypeptide reads, in one-letter code: Phycobilisome rod-core linker polypeptide CpcG2 (246 aa).

One can recognise a PBS-linker domain in the interval 11–189; that stretch reads SSQNQRVAGY…YWRDKLENSR (179 aa). The interval 224–246 is disordered; that stretch reads DTTRRDRPTVPASINPTASFPLR. A compositionally biased stretch (polar residues) spans 235-246; the sequence is ASINPTASFPLR.

This sequence belongs to the phycobilisome linker protein family. As to quaternary structure, the phycobilisome is a hemidiscoidal structure that is composed of two distinct substructures: a core complex and a number of rods radiating from the core.

The protein localises to the cellular thylakoid membrane. Rod-core linker protein required for attachment of phycocyanin to allophycocyanin in cores of phycobilisomes. In terms of biological role, linker polypeptides determine the state of aggregation and the location of the disk-shaped phycobiliprotein units within the phycobilisome and modulate their spectroscopic properties in order to mediate a directed and optimal energy transfer. This Thermosynechococcus vestitus (strain NIES-2133 / IAM M-273 / BP-1) protein is Phycobilisome rod-core linker polypeptide CpcG2 (cpcG2).